The primary structure comprises 105 residues: Large ribosomal subunit protein bL21 (105 aa).

The protein belongs to the bacterial ribosomal protein bL21 family. In terms of assembly, part of the 50S ribosomal subunit. Contacts protein L20.

This protein binds to 23S rRNA in the presence of protein L20. This Phocaeicola vulgatus (strain ATCC 8482 / DSM 1447 / JCM 5826 / CCUG 4940 / NBRC 14291 / NCTC 11154) (Bacteroides vulgatus) protein is Large ribosomal subunit protein bL21.